The following is a 150-amino-acid chain: Classical arabinogalactan protein 6 (150 aa).

A signal peptide spans 1-20 (MARQFVVLVLLTLTIATAFA). Composition is skewed to low complexity over residues 19–75 (FAAD…SPAA) and 85–98 (SASS…APTV). Positions 19 to 131 (FAADAPSASP…ESPKSGAVTT (113 aa)) are disordered. Serine 126 carries the GPI-anchor amidated serine lipid modification. The propeptide at 127 to 150 (GAVTTAKFSVVGTVATVGFFFFSF) is removed in mature form.

This sequence belongs to the classical AGP family. O-glycosylated on the hydroxyproline residues. In terms of tissue distribution, expressed in the anthers.

It is found in the cell membrane. In terms of biological role, proteoglycan that seems to be implicated in diverse developmental roles such as differentiation, cell-cell recognition, embryogenesis and programmed cell death. Plays an important role during the formation of the nexine layer of the pollen wall. The polypeptide is Classical arabinogalactan protein 6 (AGP6) (Arabidopsis thaliana (Mouse-ear cress)).